The following is an 848-amino-acid chain: Translation initiation factor IF-2 (848 aa).

The disordered stretch occupies residues 1-20; sequence MNESKGAVDSGLMSGKTERT. Positions 346-516 constitute a tr-type G domain; that stretch reads PRAPVVTVMG…LLMAELLELK (171 aa). The G1 stretch occupies residues 355–362; sequence GHVDHGKT. 355–362 contacts GTP; the sequence is GHVDHGKT. A G2 region spans residues 380–384; the sequence is GITQH. The tract at residues 402-405 is G3; sequence DTPG. GTP-binding positions include 402–406 and 456–459; these read DTPGH and NKID. Residues 456-459 are G4; the sequence is NKID. The segment at 492 to 494 is G5; it reads SAK.

Belongs to the TRAFAC class translation factor GTPase superfamily. Classic translation factor GTPase family. IF-2 subfamily.

Its subcellular location is the cytoplasm. Functionally, one of the essential components for the initiation of protein synthesis. Protects formylmethionyl-tRNA from spontaneous hydrolysis and promotes its binding to the 30S ribosomal subunits. Also involved in the hydrolysis of GTP during the formation of the 70S ribosomal complex. The polypeptide is Translation initiation factor IF-2 (Ehrlichia canis (strain Jake)).